The sequence spans 800 residues: DEP domain-containing protein 1A (800 aa).

The 85-residue stretch at 24 to 108 (FRAGMPLKKH…DNSQLYRFPS (85 aa)) folds into the DEP domain. Disordered stretches follow at residues 147–173 (ETLE…RSRE), 306–326 (SQPG…AKNP), and 459–485 (INTS…ARAR). In terms of domain architecture, Rho-GAP spans 281–321 (PLLTYQYYELFVNILVMCGYITTPKSQPGKRKNQEEPNCPQ). Over residues 459–468 (INTSGSSVSS) the composition is skewed to low complexity.

The protein is DEP domain-containing protein 1A (depdc1a) of Danio rerio (Zebrafish).